Here is a 115-residue protein sequence, read N- to C-terminus: uncharacterized protein (115 aa).

This is an uncharacterized protein from Homo sapiens (Human).